The primary structure comprises 711 residues: L-type lectin-domain containing receptor kinase VIII.2 (711 aa).

The N-terminal stretch at 1–30 (MLKLPPRFFSVYSTLIHILASFLCSSDVRG) is a signal peptide. At 31 to 315 (DFPATRFDLG…NKLCKKSPAA (285 aa)) the chain is on the extracellular side. Positions 35-260 (TRFDLGTLTL…IHSVDWWSFS (226 aa)) are legume-lectin like. N-linked (GlcNAc...) asparagine glycosylation occurs at asparagine 57. Residues 265–306 (ESSESPPPMPNSPPPSSPSSSITPSLSTVRRKTADPSSSCRN) form a disordered region. The segment covering 269-281 (SPPPMPNSPPPSS) has biased composition (pro residues). A compositionally biased stretch (low complexity) spans 282-291 (PSSSITPSLS). A helical transmembrane segment spans residues 316–336 (VAGVVTAGAFFLALFAGVIIW). Topologically, residues 337–711 (VYSKKIKYTR…IFIVGKDRSV (375 aa)) are cytoplasmic. Positions 374-656 (FSSSRVIGNG…LVGEADVPEV (283 aa)) constitute a Protein kinase domain. ATP contacts are provided by residues 380 to 388 (IGNGAFGTV) and lysine 403. Residue aspartate 497 is the Proton acceptor of the active site.

This sequence in the C-terminal section; belongs to the protein kinase superfamily. Ser/Thr protein kinase family. In the N-terminal section; belongs to the leguminous lectin family.

Its subcellular location is the cell membrane. The catalysed reaction is L-seryl-[protein] + ATP = O-phospho-L-seryl-[protein] + ADP + H(+). It carries out the reaction L-threonyl-[protein] + ATP = O-phospho-L-threonyl-[protein] + ADP + H(+). In terms of biological role, involved in resistance response to the pathogenic oomycetes Phytophthora infestans and Phytophthora capsici. This is L-type lectin-domain containing receptor kinase VIII.2 from Arabidopsis thaliana (Mouse-ear cress).